The following is a 438-amino-acid chain: 3-phosphoshikimate 1-carboxyvinyltransferase 1 (438 aa).

3-phosphoshikimate is bound by residues Lys30, Ser31, and Arg35. Lys30 serves as a coordination point for phosphoenolpyruvate. Residues Gly104 and Arg132 each coordinate phosphoenolpyruvate. Ser178, Ser179, Gln180, Ser207, Glu326, and His353 together coordinate 3-phosphoshikimate. Gln180 is a binding site for phosphoenolpyruvate. Residue Glu326 is the Proton acceptor of the active site. Phosphoenolpyruvate-binding residues include Arg357, Arg398, and Lys423.

It belongs to the EPSP synthase family. As to quaternary structure, monomer.

Its subcellular location is the cytoplasm. The enzyme catalyses 3-phosphoshikimate + phosphoenolpyruvate = 5-O-(1-carboxyvinyl)-3-phosphoshikimate + phosphate. The protein operates within metabolic intermediate biosynthesis; chorismate biosynthesis; chorismate from D-erythrose 4-phosphate and phosphoenolpyruvate: step 6/7. Functionally, catalyzes the transfer of the enolpyruvyl moiety of phosphoenolpyruvate (PEP) to the 5-hydroxyl of shikimate-3-phosphate (S3P) to produce enolpyruvyl shikimate-3-phosphate and inorganic phosphate. This chain is 3-phosphoshikimate 1-carboxyvinyltransferase 1, found in Streptomyces coelicolor (strain ATCC BAA-471 / A3(2) / M145).